The following is a 173-amino-acid chain: Photosystem I assembly protein Ycf3 (173 aa).

TPR repeat units lie at residues 35-68 (AYVYYRDGLSAQNAGDYAEALENYEESLKLEESP), 72-105 (SETLKNMAIIYMSNGDEDLALDTYQRALDQNSNQ), and 120-153 (GRTAQEAGLQDEADRLFDRAADVWTQAVRLYPGG).

It belongs to the Ycf3 family.

It localises to the cellular thylakoid membrane. Its function is as follows. Essential for the assembly of the photosystem I (PSI) complex. May act as a chaperone-like factor to guide the assembly of the PSI subunits. This Prochlorococcus marinus (strain MIT 9313) protein is Photosystem I assembly protein Ycf3.